A 245-amino-acid polypeptide reads, in one-letter code: DNA repair protein RecO (245 aa).

It belongs to the RecO family.

Functionally, involved in DNA repair and RecF pathway recombination. The chain is DNA repair protein RecO from Chromobacterium violaceum (strain ATCC 12472 / DSM 30191 / JCM 1249 / CCUG 213 / NBRC 12614 / NCIMB 9131 / NCTC 9757 / MK).